Here is a 212-residue protein sequence, read N- to C-terminus: NAD(P)H-hydrate epimerase (212 aa).

One can recognise a YjeF N-terminal domain in the interval 10-212 (MRSLERAAIA…IGVIVKPIGL (203 aa)). Residue 65–69 (NNGGD) participates in (6S)-NADPHX binding. Residues Asn-66 and Asp-129 each contribute to the K(+) site. (6S)-NADPHX-binding positions include 133 to 139 (GLGLTRP) and Asp-161. Residue Ser-164 coordinates K(+).

The protein belongs to the NnrE/AIBP family. It depends on K(+) as a cofactor.

It carries out the reaction (6R)-NADHX = (6S)-NADHX. The catalysed reaction is (6R)-NADPHX = (6S)-NADPHX. Its function is as follows. Catalyzes the epimerization of the S- and R-forms of NAD(P)HX, a damaged form of NAD(P)H that is a result of enzymatic or heat-dependent hydration. This is a prerequisite for the S-specific NAD(P)H-hydrate dehydratase to allow the repair of both epimers of NAD(P)HX. This Rhodobacter capsulatus (strain ATCC BAA-309 / NBRC 16581 / SB1003) protein is NAD(P)H-hydrate epimerase.